We begin with the raw amino-acid sequence, 355 residues long: Heterogeneous nuclear ribonucleoprotein D0 (355 aa).

Residues 1–91 (MSEEQFGGDG…SSPRHTEAAA (91 aa)) are disordered. Ser-2 carries the N-acetylserine modification. Over residues 11–43 (AAAAATAAVGGSAGEQEGAMVAAAAQGPAAAAG) the composition is skewed to low complexity. Residues 44–58 (SGSGGGGSAAGGTEG) are compositionally biased toward gly residues. Residues 64-73 (EGAKIDASKN) are compositionally biased toward basic and acidic residues. Residue Ser-71 is modified to Phosphoserine. Residue Lys-72 forms a Glycyl lysine isopeptide (Lys-Gly) (interchain with G-Cter in SUMO2) linkage. A phosphoserine mark is found at Ser-80, Ser-82, and Ser-83. RRM domains lie at 97–179 (WKMF…KTKE) and 182–261 (KKIF…MSKE). Residue Lys-119 is modified to N6-methyllysine. Residue Thr-127 is modified to Phosphothreonine. Lys-129 participates in a covalent cross-link: Glycyl lysine isopeptide (Lys-Gly) (interchain with G-Cter in SUMO2). Residue Lys-165 is modified to N6-acetyllysine. Ser-190 carries the phosphoserine modification. Thr-193 carries the post-translational modification Phosphothreonine. Lys-197 is covalently cross-linked (Glycyl lysine isopeptide (Lys-Gly) (interchain with G-Cter in SUMO2)). Lys-243 and Lys-251 each carry N6-acetyllysine. Omega-N-methylarginine occurs at positions 261 and 263. The residue at position 271 (Ser-271) is a Phosphoserine. Residues Arg-272, Arg-278, Arg-280, and Arg-282 each carry the omega-N-methylarginine modification. The residue at position 345 (Arg-345) is an Asymmetric dimethylarginine; alternate. Arg-345 is subject to Dimethylated arginine; alternate. The residue at position 345 (Arg-345) is an Omega-N-methylarginine; alternate.

In terms of assembly, identified in a IGF2BP1-dependent mRNP granule complex containing untranslated mRNAs. Part of a complex associated with the FOS mCRD domain and consisting of PABPC1, PAIP1, CSDE1/UNR and SYNCRIP. Interacts with IGF2BP2. Interacts with GTPBP1. Interacts with EIF4G1; the interaction requires RNA. Interacts with EIF3B and RPS3. Post-translationally, methylated by PRMT1, in an insulin-dependent manner. The PRMT1-mediated methylation regulates its phosphorylation. Arg-345 is dimethylated, probably to asymmetric dimethylarginine.

It is found in the nucleus. The protein resides in the cytoplasm. In terms of biological role, binds with high affinity to RNA molecules that contain AU-rich elements (AREs) found within the 3'-UTR of many proto-oncogenes and cytokine mRNAs. Also binds to double- and single-stranded DNA sequences in a specific manner and functions a transcription factor. Each of the RNA-binding domains specifically can bind solely to a single-stranded non-monotonous 5'-UUAG-3' sequence and also weaker to the single-stranded 5'-TTAGGG-3' telomeric DNA repeat. Binds RNA oligonucleotides with 5'-UUAGGG-3' repeats more tightly than the telomeric single-stranded DNA 5'-TTAGGG-3' repeats. Binding of RRM1 to DNA inhibits the formation of DNA quadruplex structure which may play a role in telomere elongation. May be involved in translationally coupled mRNA turnover. Implicated with other RNA-binding proteins in the cytoplasmic deadenylation/translational and decay interplay of the FOS mRNA mediated by the major coding-region determinant of instability (mCRD) domain. May play a role in the regulation of the rhythmic expression of circadian clock core genes. Directly binds to the 3'UTR of CRY1 mRNA and induces CRY1 rhythmic translation. May also be involved in the regulation of PER2 translation. This is Heterogeneous nuclear ribonucleoprotein D0 (Hnrnpd) from Mus musculus (Mouse).